A 132-amino-acid chain; its full sequence is Small ribosomal subunit protein bS6 (132 aa).

The segment at 96-132 (HAEGPSIQMQKRDERERGDRGDRSDRGDRGDRGGFRR) is disordered. Residues 105-132 (QKRDERERGDRGDRSDRGDRGDRGGFRR) are compositionally biased toward basic and acidic residues.

This sequence belongs to the bacterial ribosomal protein bS6 family.

Its function is as follows. Binds together with bS18 to 16S ribosomal RNA. This is Small ribosomal subunit protein bS6 from Cereibacter sphaeroides (strain ATCC 17023 / DSM 158 / JCM 6121 / CCUG 31486 / LMG 2827 / NBRC 12203 / NCIMB 8253 / ATH 2.4.1.) (Rhodobacter sphaeroides).